The primary structure comprises 205 residues: Arginine exporter protein ArgO (205 aa).

6 helical membrane-spanning segments follow: residues M1 to P21, L42 to L62, L67 to A87, I111 to V131, W147 to A167, and L185 to L205.

Belongs to the LysE/ArgO transporter (TC 2.A.75) family.

The protein resides in the cell inner membrane. The enzyme catalyses L-arginine(in) = L-arginine(out). Functionally, involved in the export of arginine. Important to control the intracellular level of arginine and the correct balance between arginine and lysine. This is Arginine exporter protein ArgO from Yersinia pseudotuberculosis serotype IB (strain PB1/+).